A 279-amino-acid polypeptide reads, in one-letter code: Putative hydro-lyase GDI0188/Gdia_2258 (279 aa).

Belongs to the D-glutamate cyclase family.

This is Putative hydro-lyase GDI0188/Gdia_2258 from Gluconacetobacter diazotrophicus (strain ATCC 49037 / DSM 5601 / CCUG 37298 / CIP 103539 / LMG 7603 / PAl5).